The chain runs to 485 residues: Adenosylhomocysteinase (485 aa).

Residues Thr64, Asp139, and Glu205 each contribute to the substrate site. NAD(+) is bound at residue 206 to 208 (TTT). Positions 235 and 239 each coordinate substrate. Residues Asn240, 269–274 (GYGDVG), Glu292, Asn327, 348–350 (IGH), and Asn397 contribute to the NAD(+) site.

Belongs to the adenosylhomocysteinase family. Requires NAD(+) as cofactor.

It carries out the reaction S-adenosyl-L-homocysteine + H2O = L-homocysteine + adenosine. Its pathway is amino-acid biosynthesis; L-homocysteine biosynthesis; L-homocysteine from S-adenosyl-L-homocysteine: step 1/1. Adenosylhomocysteine is a competitive inhibitor of S-adenosyl-L-methionine-dependent methyl transferase reactions; therefore adenosylhomocysteinase may play a key role in the control of methylations via regulation of the intracellular concentration of adenosylhomocysteine. The polypeptide is Adenosylhomocysteinase (SAHH) (Solanum lycopersicum (Tomato)).